We begin with the raw amino-acid sequence, 153 residues long: Peptide methionine sulfoxide reductase MsrA (153 aa).

Cys-10 is a catalytic residue.

This sequence belongs to the MsrA Met sulfoxide reductase family.

It catalyses the reaction L-methionyl-[protein] + [thioredoxin]-disulfide + H2O = L-methionyl-(S)-S-oxide-[protein] + [thioredoxin]-dithiol. It carries out the reaction [thioredoxin]-disulfide + L-methionine + H2O = L-methionine (S)-S-oxide + [thioredoxin]-dithiol. Has an important function as a repair enzyme for proteins that have been inactivated by oxidation. Catalyzes the reversible oxidation-reduction of methionine sulfoxide in proteins to methionine. This chain is Peptide methionine sulfoxide reductase MsrA, found in Methanococcoides burtonii (strain DSM 6242 / NBRC 107633 / OCM 468 / ACE-M).